Reading from the N-terminus, the 327-residue chain is 2-methoxy-6-polyprenyl-1,4-benzoquinol methylase, mitochondrial (327 aa).

The transit peptide at 1-49 (MAAPRSCALWSYCGRGWSWAMRGCQLLGLRSSWPGAPLSARLLPQEKRA) directs the protein to the mitochondrion. S-adenosyl-L-methionine contacts are provided by residues Thr-117, Asp-171, and 199-200 (DA).

Belongs to the class I-like SAM-binding methyltransferase superfamily. MenG/UbiE family. Component of a multi-subunit COQ enzyme complex, composed of at least COQ3, COQ4, COQ5, COQ6, COQ7 and COQ9. Interacts with PYURF; the interaction is direct, stabilizes COQ5 protein and associates PYURF with COQ enzyme complex.

It localises to the mitochondrion inner membrane. It carries out the reaction 2-methoxy-6-(all-trans-decaprenyl)benzene-1,4-diol + S-adenosyl-L-methionine = 5-methoxy-2-methyl-3-(all-trans-decaprenyl)benzene-1,4-diol + S-adenosyl-L-homocysteine + H(+). The protein operates within cofactor biosynthesis; ubiquinone biosynthesis. In terms of biological role, methyltransferase required for the conversion of 2-decaprenyl-6-methoxy-1,4-benzoquinol (DDMQH2) to 2-decaprenyl-3-methyl-6-methoxy-1,4-benzoquinol (DMQH2). The chain is 2-methoxy-6-polyprenyl-1,4-benzoquinol methylase, mitochondrial from Pongo abelii (Sumatran orangutan).